Here is a 383-residue protein sequence, read N- to C-terminus: Acetylornithine deacetylase (383 aa).

His80 is a Zn(2+) binding site. Asp82 is a catalytic residue. Residue Asp112 coordinates Zn(2+). Glu144 is a catalytic residue. Zn(2+) is bound by residues Glu145, Glu169, and His355.

The protein belongs to the peptidase M20A family. ArgE subfamily. As to quaternary structure, homodimer. It depends on Zn(2+) as a cofactor. Requires Co(2+) as cofactor. Glutathione serves as cofactor.

Its subcellular location is the cytoplasm. It catalyses the reaction N(2)-acetyl-L-ornithine + H2O = L-ornithine + acetate. The protein operates within amino-acid biosynthesis; L-arginine biosynthesis; L-ornithine from N(2)-acetyl-L-ornithine (linear): step 1/1. In terms of biological role, catalyzes the hydrolysis of the amide bond of N(2)-acetylated L-amino acids. Cleaves the acetyl group from N-acetyl-L-ornithine to form L-ornithine, an intermediate in L-arginine biosynthesis pathway, and a branchpoint in the synthesis of polyamines. In Escherichia coli O17:K52:H18 (strain UMN026 / ExPEC), this protein is Acetylornithine deacetylase.